A 711-amino-acid polypeptide reads, in one-letter code: Zinc finger CCCH domain-containing protein 32 (711 aa).

The span at 1–21 shows a compositional bias: low complexity; it reads MEADGAAAAAAAGEASTEAGA. The disordered stretch occupies residues 1–23; that stretch reads MEADGAAAAAAAGEASTEAGARP. 3 C3H1-type zinc fingers span residues 31–60, 62–88, and 112–139; these read LRRN…HSDN, RMNP…HPPI, and GKQL…HGPQ. Disordered regions lie at residues 221–246, 339–376, 405–561, and 573–701; these read KSEK…GDHP, RFNG…HSER, SSLA…EGPK, and AAWA…DDDD. Basic and acidic residues-rich tracts occupy residues 364-376 and 413-427; these read SERS…HSER and RNGE…YRER. Basic residues predominate over residues 428–437; the sequence is AHGHRSHRDH. Composition is skewed to basic and acidic residues over residues 460-509 and 585-594; these read SPDR…RRSS and KQDKSAEVSH. Acidic residues-rich tracts occupy residues 648–663 and 686–701; these read EDII…DADN and ENAY…DDDD.

The protein is Zinc finger CCCH domain-containing protein 32 of Oryza sativa subsp. japonica (Rice).